Reading from the N-terminus, the 445-residue chain is Competence protein E (445 aa).

Positions 1 to 23 are cleaved as a signal peptide; sequence MKKYFLKCGYFLVCFCLPLIVFA.

It belongs to the bacterial secretin family. PilQ subfamily.

The protein resides in the cell outer membrane. Functionally, involved in transformation (genetic competence for DNA uptake). This Haemophilus influenzae (strain ATCC 51907 / DSM 11121 / KW20 / Rd) protein is Competence protein E (comE).